We begin with the raw amino-acid sequence, 477 residues long: Lactate utilization protein B (477 aa).

4Fe-4S ferredoxin-type domains are found at residues 304–334 (GTQFQSILQCIRCAACVNVCPVYRQTGGHSY) and 353–382 (YDTYKELPYASTLCGACTEACPVKIPLHDL). C313, C316, C319, C323, C366, C369, and C373 together coordinate [4Fe-4S] cluster. The disordered stretch occupies residues 443–463 (GPKPLQAWTNSRDFPMPDDEN).

Belongs to the LutB/YkgF family.

Functionally, is involved in L-lactate degradation and allows cells to grow with lactate as the sole carbon source. Has probably a role as an electron transporter during oxidation of L-lactate. This chain is Lactate utilization protein B, found in Macrococcus caseolyticus (strain JCSC5402) (Macrococcoides caseolyticum).